A 209-amino-acid chain; its full sequence is HTLV-1 basic zipper factor (209 aa).

The segment at 48–162 (DGLLSLEEES…SARKEKMQEL (115 aa)) is disordered. 2 stretches are compositionally biased toward basic and acidic residues: residues 70–87 (APPRGETHRDRQRRAEEK) and 94–114 (REKEEEKQTAEYLKRKEEEKA). The Nuclear localization signal 1 motif lies at 87-92 (KRKRKK). 2 short sequence motifs (nuclear localization signal) span residues 116–120 (RRRRA) and 137–141 (RRERK). Over residues 122–160 (KKAADVARRKQEEQERRERKWRQGAEKAKQHSARKEKMQ) the composition is skewed to basic and acidic residues.

The protein belongs to the HTLV-1 HBZ protein family. As to quaternary structure, interacts with host ATF4; this interaction inhibits viral RNA transcriptional activation by preventing ATF4 binding to Tax-responsive elements. Interacts with host CREB1; this interaction inhibits host CREB1 transcriptional activity. Interacts with host JUN, JUNB and JUND. Interacts with host EP300.

It is found in the host nucleus. Its function is as follows. Contributes to the regulation of viral RNA transcription by interacting with host proteins involved in transcriptional activation such as ATF4, or CREB1, and by inhibiting their activity. Additionally, HBZ suppresses host NF-kappa-B-driven transcription mediated by host RELA as well as transcription of some classical NF-kappa-B target genes, including IL8, IL2RA, IRF4, VCAM1, and VEGFA. The sequence is that of HTLV-1 basic zipper factor (HBZ) from Homo sapiens (Human).